Reading from the N-terminus, the 226-residue chain is ATP synthase F(0) complex subunit a (226 aa).

The next 6 helical transmembrane spans lie at 12 to 32 (PTMM…ILFP), 68 to 88 (WALM…LGLL), 97 to 117 (QLSM…ITGF), 138 to 158 (IPML…ALAV), 164 to 184 (ITAG…LMNI), and 200 to 222 (TILE…SLYL).

The protein belongs to the ATPase A chain family. In terms of assembly, component of the ATP synthase complex composed at least of ATP5F1A/subunit alpha, ATP5F1B/subunit beta, ATP5MC1/subunit c (homooctomer), MT-ATP6/subunit a, MT-ATP8/subunit 8, ATP5ME/subunit e, ATP5MF/subunit f, ATP5MG/subunit g, ATP5MK/subunit k, ATP5MJ/subunit j, ATP5F1C/subunit gamma, ATP5F1D/subunit delta, ATP5F1E/subunit epsilon, ATP5PF/subunit F6, ATP5PB/subunit b, ATP5PD/subunit d, ATP5PO/subunit OSCP. ATP synthase complex consists of a soluble F(1) head domain (subunits alpha(3) and beta(3)) - the catalytic core - and a membrane F(0) domain - the membrane proton channel (subunits c, a, 8, e, f, g, k and j). These two domains are linked by a central stalk (subunits gamma, delta, and epsilon) rotating inside the F1 region and a stationary peripheral stalk (subunits F6, b, d, and OSCP). Interacts with DNAJC30; interaction is direct.

The protein localises to the mitochondrion inner membrane. It carries out the reaction H(+)(in) = H(+)(out). Its function is as follows. Subunit a, of the mitochondrial membrane ATP synthase complex (F(1)F(0) ATP synthase or Complex V) that produces ATP from ADP in the presence of a proton gradient across the membrane which is generated by electron transport complexes of the respiratory chain. ATP synthase complex consist of a soluble F(1) head domain - the catalytic core - and a membrane F(1) domain - the membrane proton channel. These two domains are linked by a central stalk rotating inside the F(1) region and a stationary peripheral stalk. During catalysis, ATP synthesis in the catalytic domain of F(1) is coupled via a rotary mechanism of the central stalk subunits to proton translocation. With the subunit c (ATP5MC1), forms the proton-conducting channel in the F(0) domain, that contains two crucial half-channels (inlet and outlet) that facilitate proton movement from the mitochondrial intermembrane space (IMS) into the matrix. Protons are taken up via the inlet half-channel and released through the outlet half-channel, following a Grotthuss mechanism. This chain is ATP synthase F(0) complex subunit a, found in Felis catus (Cat).